A 191-amino-acid polypeptide reads, in one-letter code: MSRIGKLPIAIPPKVEVTLDGRRVVVKGPKGTLDLTLPDSVEVVREDGRLLVTRRGESRRAREQHGLGRTLVANMVTGVTTGFTKPMQIAGVGYRVALTGRKLTINAGFSHPIEIELPAGIDIEVDPKASAIAGTRNQQGFNFVIKGFDKQAVGDLAAKIRDIRPPEPYKGKGIRYTAEKILLKAGKSGKK.

It belongs to the universal ribosomal protein uL6 family. As to quaternary structure, part of the 50S ribosomal subunit.

Functionally, this protein binds to the 23S rRNA, and is important in its secondary structure. It is located near the subunit interface in the base of the L7/L12 stalk, and near the tRNA binding site of the peptidyltransferase center. In Gloeobacter violaceus (strain ATCC 29082 / PCC 7421), this protein is Large ribosomal subunit protein uL6.